A 135-amino-acid polypeptide reads, in one-letter code: uncharacterized protein (135 aa).

The HTH hxlR-type domain occupies C25–S123.

This is an uncharacterized protein from Synechocystis sp. (strain ATCC 27184 / PCC 6803 / Kazusa).